Reading from the N-terminus, the 303-residue chain is Major fimbrium anchoring subunit FimB (303 aa).

The N-terminal stretch at 1–22 is a signal peptide; sequence MNDAKKYIVSVLILLVAGMFGG. Cysteine 23 carries N-palmitoyl cysteine lipidation. Cysteine 23 carries the S-diacylglycerol cysteine lipid modification.

This sequence belongs to the bacteroidetes fimbrillin superfamily. FimB/Mfa2 family. In terms of assembly, fimB is not part of the fimbrium itself, but anchors the fimbrium in the outer membrane. Linear, head-to-tail oligomerization of fimbrial subunits mediates assembly of the fimbrium stalk, while the minor components FimC, FimD and FimE probably form the fimbrium tip. The anchoring subunit FimB limits fimbrium length and is important for solid fimbrium attachment to the outer membrane. In its absence, the major fimbriae become very long and are easily detached from the membrane.

It is found in the cell outer membrane. Its function is as follows. Anchoring subunit of the major fimbriae. Regulates fimbrial length. These filamentous pili are attached to the cell surface; they mediate biofilm formation, adhesion onto host cells and onto other bacteria that are part of the oral microbiome. Fimbriae of P.gingivalis are major virulence factors. The protein is Major fimbrium anchoring subunit FimB of Porphyromonas gingivalis (strain ATCC 33277 / DSM 20709 / CIP 103683 / JCM 12257 / NCTC 11834 / 2561).